Here is a 901-residue protein sequence, read N- to C-terminus: Alpha-actinin-3 (901 aa).

N-acetylmethionine is present on Met-1. Positions 1 to 261 (MMMVLQPEGL…IMTYVSCFYH (261 aa)) are actin-binding. Calponin-homology (CH) domains lie at 45–149 (KQQR…LRFA) and 158–264 (TSAK…HAFA). Spectrin repeat units lie at residues 288-398 (KLME…WLLS), 408-513 (HLAE…ALER), 523-634 (QLQL…MLQE), and 644-747 (RLRR…EVEN). 2 EF-hand domains span residues 760–795 (EQLN…MGYD) and 796–831 (LGEV…ETAE). Ca(2+) contacts are provided by Asp-773, Asn-777, Met-779, Asp-784, Asp-809, and Asn-811.

Belongs to the alpha-actinin family. In terms of assembly, homodimer; antiparallel. Also forms heterodimers with ACTN2. Interacts with MYOZ1.

F-actin cross-linking protein which is thought to anchor actin to a variety of intracellular structures. This is a bundling protein. This Bos taurus (Bovine) protein is Alpha-actinin-3 (ACTN3).